Consider the following 166-residue polypeptide: Ribosomal RNA large subunit methyltransferase H (166 aa).

Residues Leu85, Gly116, and 135 to 140 each bind S-adenosyl-L-methionine; that span reads ISKMTF.

Belongs to the RNA methyltransferase RlmH family. In terms of assembly, homodimer.

The protein localises to the cytoplasm. The catalysed reaction is pseudouridine(1915) in 23S rRNA + S-adenosyl-L-methionine = N(3)-methylpseudouridine(1915) in 23S rRNA + S-adenosyl-L-homocysteine + H(+). Functionally, specifically methylates the pseudouridine at position 1915 (m3Psi1915) in 23S rRNA. The chain is Ribosomal RNA large subunit methyltransferase H from Francisella tularensis subsp. holarctica (strain FTNF002-00 / FTA).